The primary structure comprises 375 residues: SAP-like protein BP-73 (375 aa).

Disordered stretches follow at residues 46 to 113 (PNNH…VPGE), 130 to 233 (RARG…VKFQ), and 257 to 315 (TLEN…PSLQ). The span at 59–70 (HQKGGSARRKSK) shows a compositional bias: basic residues. The span at 76-86 (DDSENIDEFDT) shows a compositional bias: acidic residues. A compositionally biased stretch (polar residues) spans 88–109 (IMSSKNGPPISLTSNSRPQATS). Basic and acidic residues-rich tracts occupy residues 134–152 (KGKE…ERGS) and 163–186 (HSVD…KRSN). A compositionally biased stretch (polar residues) spans 187 to 197 (ESGNKQNSSIF). A compositionally biased stretch (acidic residues) spans 295-311 (DEPDASDTDEPSGEYDE). Residues 338 to 375 (DLSTLKVTELRELAKSRGIKGYSKMKKNDLVELLSNMA) form an interaction with WAXY region.

In terms of assembly, binds to the DNA in the promoter region of WAXY containing the sequence 5'-ACGCACGCTAACGTGA-3'. As to expression, expressed in tissues with high cell division activities: in root tips, stem node, panicle, flower and immature seed. Weakly expressed in root and leaf.

In terms of biological role, may regulate cell proliferation and plant growth. The polypeptide is SAP-like protein BP-73 (BP-73) (Oryza sativa subsp. japonica (Rice)).